Consider the following 851-residue polypeptide: Glutathione transporter 1 (851 aa).

Over residues 1–14 the composition is skewed to polar residues; that stretch reads MTARNSASIPTSIR. The tract at residues 1 to 116 is disordered; that stretch reads MTARNSASIP…LDNETDSEVE (116 aa). Asn32 carries an N-linked (GlcNAc...) asparagine glycan. The span at 33-68 shows a compositional bias: low complexity; it reads LSTKTASKTSLTFRQSSSDESTSSYSGNHHNINIQH. Residues 74 to 92 show a composition bias toward polar residues; it reads FRTNSSSFSPNDYSISESP. A glycan (N-linked (GlcNAc...) asparagine) is linked at Asn77. Phosphoserine is present on Ser93. Residues 105 to 134 adopt a coiled-coil conformation; it reads VQLDNETDSEVESEVEELERELEAIEDSVY. An N-linked (GlcNAc...) asparagine glycan is attached at Asn109. A run of 2 helical transmembrane segments spans residues 156 to 176 and 179 to 199; these read TWVLTTIFVIVFAAVNQFFSL and PALSISFIVAQLILFPLGKLL. N-linked (GlcNAc...) asparagine glycosylation occurs at Asn256. The next 4 membrane-spanning stretches (helical) occupy residues 259 to 279, 282 to 302, 333 to 353, and 405 to 425; these read WGYKILIVLTSQMLGYGFAGL, RWIVYPAAMIWPQTLVSTVLF, FFAYVMIGSFVFYWFPGFIFK, and WVICNTFGSVVLIFWIVVPIL. N-linked (GlcNAc...) asparagine glycans are attached at residues Asn452 and Asn464. 5 consecutive transmembrane segments (helical) span residues 480 to 500, 531 to 551, 560 to 580, 592 to 612, and 642 to 662; these read YSMSTALNFAAVTAIFTHCAL, APQWWYATLFIVVFGLTIFTV, VWALIVALLIFIVNFIPQGVL, IITELIGGYILPGKPLANLMI, and ILFFVQLFATILGGITQVAVQ. Asn691 carries an N-linked (GlcNAc...) asparagine glycan. The next 3 helical transmembrane spans lie at 711-731, 757-777, and 791-811; these read YYPLIFFFLIGAVAPFITWGL, PATGINYSSWAIVGFIFNYVI, and VLAAAMDSGVAVAGVVIFLCV. N-linked (GlcNAc...) asparagine glycosylation is present at Asn843.

It belongs to the oligopeptide OPT transporter family.

The protein localises to the endoplasmic reticulum membrane. Its subcellular location is the cell membrane. Its function is as follows. High-affinity glutathione transporter which plays a role in scavenging glutathione from the extracellular environment for the maintenance of sulfur homeostasis. This Schizosaccharomyces pombe (strain 972 / ATCC 24843) (Fission yeast) protein is Glutathione transporter 1 (pgt1).